A 174-amino-acid polypeptide reads, in one-letter code: UPF0398 protein llmg_0513 (174 aa).

The protein belongs to the UPF0398 family.

In Lactococcus lactis subsp. cremoris (strain MG1363), this protein is UPF0398 protein llmg_0513.